We begin with the raw amino-acid sequence, 184 residues long: Ribosome maturation factor RimP (184 aa).

Belongs to the RimP family.

Its subcellular location is the cytoplasm. In terms of biological role, required for maturation of 30S ribosomal subunits. This Zymomonas mobilis subsp. mobilis (strain ATCC 31821 / ZM4 / CP4) protein is Ribosome maturation factor RimP.